Consider the following 109-residue polypeptide: Cell division suppressor protein YneA (109 aa).

In terms of domain architecture, LysM spans 39-90; the sequence is SEVNVSEGDSLWALADQYAGKSDMAKADFVSWVEKENNLADGHVEAGDSVVI.

This sequence belongs to the YneA family.

The protein localises to the cytoplasm. In terms of biological role, inhibits cell division during the SOS response. Affects a later stage of the cell division protein assembly, after the assembly of the Z ring, by probably suppressing recruitment of FtsL and/or DivIC to the division machinery. The polypeptide is Cell division suppressor protein YneA (Listeria monocytogenes serotype 4b (strain CLIP80459)).